Consider the following 192-residue polypeptide: Erythropoietin (192 aa).

A signal peptide spans 1–26 (MGVPDCLALPLLVTFLLLSLGLPVLG). A disulfide bridge connects residues C33 and C187. Residues N50, N64, and N109 are each glycosylated (N-linked (GlcNAc...) asparagine).

This sequence belongs to the EPO/TPO family.

It localises to the secreted. Hormone involved in the regulation of erythrocyte proliferation and differentiation and the maintenance of a physiological level of circulating erythrocyte mass. Binds to EPOR leading to EPOR dimerization and JAK2 activation thereby activating specific downstream effectors, including STAT1 and STAT3. The polypeptide is Erythropoietin (EPO) (Spalax golani (Golan Heights blind mole rat)).